The sequence spans 159 residues: MTKVLVLSDTHGYNDRWLAVMKLHNPDVVIHAGDHLTTKKFMDQNATFWVAGNHDVVGEEIQMFELEGIQFVLMHGHQAPRHDLKQWYKMLVDQAKSYLCDVLIVGHSHIEHYETIDGIQVINPGSLEIPRNPRKLPTYCNLNLSQGRISDLTFHFPRD.

Mn(2+)-binding residues include D9, H11, D34, N53, H75, H107, and H109.

The protein belongs to the metallophosphoesterase superfamily. YfcE family. Mn(2+) is required as a cofactor.

The polypeptide is Probable metallophosphoesterase MPN_126 (Mycoplasma pneumoniae (strain ATCC 29342 / M129 / Subtype 1) (Mycoplasmoides pneumoniae)).